A 389-amino-acid chain; its full sequence is S-adenosylmethionine synthase (389 aa).

ATP is bound at residue His17. Asp19 serves as a coordination point for Mg(2+). Glu45 provides a ligand contact to K(+). Residues Glu58 and Gln101 each contribute to the L-methionine site. The interval Gln101 to Glu111 is flexible loop. Residues Asp168–Lys170, Arg234–Phe235, Asp243, Arg249–Lys250, Ala266, and Lys270 each bind ATP. Asp243 is an L-methionine binding site. Lys274 contributes to the L-methionine binding site.

Belongs to the AdoMet synthase family. As to quaternary structure, homotetramer; dimer of dimers. Mg(2+) serves as cofactor. It depends on K(+) as a cofactor.

The protein localises to the cytoplasm. It catalyses the reaction L-methionine + ATP + H2O = S-adenosyl-L-methionine + phosphate + diphosphate. Its pathway is amino-acid biosynthesis; S-adenosyl-L-methionine biosynthesis; S-adenosyl-L-methionine from L-methionine: step 1/1. Its function is as follows. Catalyzes the formation of S-adenosylmethionine (AdoMet) from methionine and ATP. The overall synthetic reaction is composed of two sequential steps, AdoMet formation and the subsequent tripolyphosphate hydrolysis which occurs prior to release of AdoMet from the enzyme. This Geobacter sp. (strain M21) protein is S-adenosylmethionine synthase.